The primary structure comprises 840 residues: MSVVGIDLGFQSCYVAVARAGGIETIANEYSDRCTPACISFGPKNRSIGAAAKSQVISNAKNTVQGFKRFHGRAFSDPFVEAEKSNLAYDIVQLPTGLTGIKVKYMEEERNFTTEQVTAMLLSKLKETAESVLKKPVVDCVVSVPCFYTDAERRSVMDATQIAGLNCLRLMNETTAVALAYGIYKQDLPALEEKPRNVVFVDMGHSSYQVSVCAFNRGKLKVLATAFDTTLGGRKFDEVLVNHFCEEFGKKYKLDIKSKIRALLRLSQECEKLKKLMSANASDLPLSIECFMNDVDVSGTMNRGKFLEMCDDLLARVEPPLRSVLEQAKLRKEDIYAVEIVGGATRIPAVKEKISKFFGKELSTTLNADEAVTRGCALQCAILSPAFKVREFSITDVVPYSISLRWNSPAEEGSSDCEVFTKNHSAPFSKVLTFYRKEPFTLEAYYSSPQDLPYPDPAIAQFLVQKVTPQSDGSSSKVKVKVRVNVHGIFSVSSASLVEVLKFEENEEPMETDQNAKEEEKMQVDQEEPHAEEQQQQTPAENKAESEEMETSQAASKDKKMDQPPQAKKAKVKTSTVDLPIENQLLWQIDREMLNLYIENEGKMIMQDKLKKERNDAKNAVEEYVYEMRDKLSGEYEKFVSEDDRNSFTLKLEDTENWLYEDGEDQPKQVYVDKLAELKNLGQPIKMRFQESEERPKLFEELGKQIQQYMKVISSFKNKEDQYDHLDAADMLKVEKSTNEAMEWMNNKLNLQNKQSLTVDPVVKAKEIEAKIKELMSVCGPIISKPKPKVEPPKEEQKNAEQNGPVDGQGDSPGPQAAEQGTDTAVPSDSDKKLPEMDID.

Lysine 53 carries the post-translational modification N6-acetyllysine. Position 76 is a phosphoserine (serine 76). Phosphotyrosine is present on residues tyrosine 89 and tyrosine 336. Serine 393 and serine 415 each carry phosphoserine. Lysine 430 carries the N6-acetyllysine modification. A disordered region spans residues 506–575 (NEEPMETDQN…QAKKAKVKTS (70 aa)). Residues 514 to 533 (QNAKEEEKMQVDQEEPHAEE) are compositionally biased toward basic and acidic residues. At threonine 538 the chain carries Phosphothreonine. 2 positions are modified to phosphoserine: serine 546 and serine 647. Residue tyrosine 660 is modified to Phosphotyrosine. Lysine 679 bears the N6-acetyllysine mark. At serine 756 the chain carries Phosphoserine. Lysine 773 is subject to N6-methyllysine. The disordered stretch occupies residues 782 to 840 (IISKPKPKVEPPKEEQKNAEQNGPVDGQGDSPGPQAAEQGTDTAVPSDSDKKLPEMDID). Composition is skewed to basic and acidic residues over residues 788 to 799 (PKVEPPKEEQKN) and 829 to 840 (DSDKKLPEMDID).

The protein belongs to the heat shock protein 70 family. Interacts with TJP1/ZO-1.

The protein resides in the cytoplasm. The protein is Heat shock 70 kDa protein 4 (HSPA4) of Canis lupus familiaris (Dog).